A 312-amino-acid polypeptide reads, in one-letter code: Non-structural protein 12A (312 aa).

Residues 1–23 (MFKSGSGSLKRSGSISSVKSFSG) show a composition bias toward low complexity. 3 disordered regions span residues 1 to 37 (MFKSGSGSLKRSGSISSVKSFSGDSEKGLPPISRGSV), 62 to 97 (FVPEKTKSEGNLKNKSSVITGNFGSSGPTNAHYNQN), and 112 to 159 (SSKG…SHGT). Basic and acidic residues predominate over residues 63–73 (VPEKTKSEGNL). Polar residues predominate over residues 74–97 (KNKSSVITGNFGSSGPTNAHYNQN). Basic and acidic residues predominate over residues 122-134 (DARHTATDSRLSQ). Polar residues predominate over residues 135-154 (EVKQPFSEENASGNDLNTGR).

The protein belongs to the phytoreovirus non-structural protein Pns12A family.

Its subcellular location is the host cytoplasm. Its function is as follows. Constituent of viral factories. This is Non-structural protein 12A from Rice dwarf virus (isolate O) (RDV).